A 704-amino-acid polypeptide reads, in one-letter code: Neutral ceramidase (704 aa).

The first 23 residues, 1–23 (MAISKIAFLALIALSGLCGLASA), serve as a signal peptide directing secretion. A glycan (N-linked (GlcNAc...) asparagine) is linked at Asn-230. The active-site Nucleophile is the Ser-276. N-linked (GlcNAc...) asparagine glycosylation is found at Asn-362, Asn-550, and Asn-598.

The protein belongs to the neutral ceramidase family. Post-translationally, N-glycosylated.

The protein localises to the secreted. The catalysed reaction is an N-acylsphing-4-enine + H2O = sphing-4-enine + a fatty acid. Functionally, hydrolyzes the sphingolipid ceramide into sphingosine and free fatty acid at an optimal pH of 6.5-7.5. Acts as a key regulator of sphingolipid signaling metabolites by generating sphingosine at the cell surface. This is Neutral ceramidase (CDase) from Drosophila pseudoobscura pseudoobscura (Fruit fly).